The chain runs to 129 residues: Small ribosomal subunit protein uS11 (129 aa).

This sequence belongs to the universal ribosomal protein uS11 family. In terms of assembly, part of the 30S ribosomal subunit. Interacts with proteins S7 and S18. Binds to IF-3.

Located on the platform of the 30S subunit, it bridges several disparate RNA helices of the 16S rRNA. Forms part of the Shine-Dalgarno cleft in the 70S ribosome. This is Small ribosomal subunit protein uS11 from Enterobacter sp. (strain 638).